A 2282-amino-acid chain; its full sequence is Cation channel sperm-associated targeting subunit tau (2282 aa).

A disordered region spans residues 1-118 (MELPPPGNRR…RGKGKGTGTR (118 aa)). Polar residues-rich tracts occupy residues 11–41 (VSIN…SLKR) and 50–87 (MMSN…NLSS). Residues 90-109 (YADEEGKPLTDKNKDKDKGR) are compositionally biased toward basic and acidic residues. The 136-residue stretch at 131–266 (QSDEMAIANQ…IQKGCFTEVM (136 aa)) folds into the C2 domain. Disordered stretches follow at residues 397–416 (MTKR…SSAL), 656–679 (EHED…TWAE), 747–1066 (NKLI…SHDP), 1104–1153 (SAKS…DKQS), 1217–1240 (YTND…TDDR), 1426–1445 (NSLL…DSRS), 1452–1515 (RQNT…SLDK), 1542–1569 (ERRQ…LEKT), 1908–1928 (NQAN…LKKQ), and 2187–2222 (PKKS…EPNK). 5 stretches are compositionally biased toward polar residues: residues 750-760 (ITDSSFNTTKP), 783-792 (SDPSSNTTKP), 800-841 (DPSS…SDLN), 849-858 (IVSTISSDPN), and 953-974 (SARS…TKLS). A compositionally biased stretch (low complexity) spans 1104–1123 (SAKSLDSNNSSASSSPTVNS). Residues 1124-1136 (DTTTNAAEPSGTK) show a composition bias toward polar residues. 2 stretches are compositionally biased toward polar residues: residues 1452 to 1466 (RQNT…SSVS) and 1473 to 1482 (DCQSISTQES). Over residues 1484 to 1493 (YPVRDTKSDS) the composition is skewed to basic and acidic residues. Residues 1495 to 1504 (NDTEEMELDS) show a composition bias toward acidic residues. Basic and acidic residues-rich tracts occupy residues 1542 to 1555 (ERRQ…ESLI) and 1916 to 1925 (SPERPSDISL).

In terms of assembly, component of the CatSper complex or CatSpermasome composed of the core pore-forming members CATSPER1, CATSPER2, CATSPER3 and CATSPER4 as well as auxiliary members CATSPERB, CATSPERG, CATSPERD, CATSPERE, CATSPERZ, C2CD6/CATSPERT, SLCO6C1, TMEM249, TMEM262 and EFCAB9. HSPA1 may be an additional auxiliary complex member. The core complex members CATSPER1, CATSPER2, CATSPER3 and CATSPER4 form a heterotetrameric channel. The auxiliary CATSPERB, CATSPERG, CATSPERD and CATSPERE subunits form a pavilion-like structure over the pore which stabilizes the complex through interactions with CATSPER4, CATSPER3, CATSPER1 and CATSPER2 respectively. SLCO6C1 interacts with CATSPERE and TMEM262/CATSPERH interacts with CATSPERB, further stabilizing the complex. C2CD6/CATSPERT interacts at least with CATSPERD and is required for targeting the CatSper complex in the flagellar membrane. As to expression, expressed in cauda sperm (at protein level).

The protein resides in the cell projection. The protein localises to the cilium. It localises to the flagellum membrane. Its function is as follows. Auxiliary component of the CatSper complex, a complex involved in sperm cell hyperactivation. Sperm cell hyperactivation is needed for sperm motility which is essential late in the preparation of sperm for fertilization. Required for CatSper complex targeting and trafficking into the quadrilinear nanodomains. Targets the preassembled CatSper complexes to elongating flagella, where it links the channel-carrying vesicles and motor proteins. This Mus musculus (Mouse) protein is Cation channel sperm-associated targeting subunit tau.